Consider the following 267-residue polypeptide: 3-methyl-2-oxobutanoate hydroxymethyltransferase (267 aa).

Mg(2+)-binding residues include D46 and D85. Residues 46–47 (DS), D85, and K115 contribute to the 3-methyl-2-oxobutanoate site. E117 contributes to the Mg(2+) binding site. Catalysis depends on E184, which acts as the Proton acceptor.

It belongs to the PanB family. Homodecamer; pentamer of dimers. It depends on Mg(2+) as a cofactor.

It localises to the cytoplasm. It carries out the reaction 3-methyl-2-oxobutanoate + (6R)-5,10-methylene-5,6,7,8-tetrahydrofolate + H2O = 2-dehydropantoate + (6S)-5,6,7,8-tetrahydrofolate. Its pathway is cofactor biosynthesis; (R)-pantothenate biosynthesis; (R)-pantoate from 3-methyl-2-oxobutanoate: step 1/2. Functionally, catalyzes the reversible reaction in which hydroxymethyl group from 5,10-methylenetetrahydrofolate is transferred onto alpha-ketoisovalerate to form ketopantoate. The protein is 3-methyl-2-oxobutanoate hydroxymethyltransferase of Geotalea uraniireducens (strain Rf4) (Geobacter uraniireducens).